The sequence spans 343 residues: General transcription and DNA repair factor IIH subunit TFB6 (343 aa).

At Tyr-69 the chain carries Phosphotyrosine. 2 positions are modified to phosphothreonine: Thr-71 and Thr-84. A phosphoserine mark is found at Ser-104, Ser-105, Ser-108, and Ser-342.

Component of the general transcription factor TFIIH, composed of a 7-subunit TFIIH core complex composed of XPB/SSL2, XPD/RAD3, SSL1, TFB1, TFB2, TFB4 and TFB5 which is active in NER; the 3-subunit CTD-kinase module TFIIK composed of CCL1, KIN28, and TFB3 which is active in transcription; as well as TFB6 that regulates SSL2 association with the complex. Post-translationally, phosphorylation leads the dissociation of from SSL2.

The protein localises to the cytoplasm. The protein resides in the nucleus. In terms of biological role, component of the general transcription and DNA repair factor IIH (TFIIH) core complex, which is involved in general and transcription-coupled nucleotide excision repair (NER) of damaged DNA and, when complexed to TFIIK, in RNA transcription by RNA polymerase II. In NER, TFIIH acts by opening DNA around the lesion to allow the excision of the damaged oligonucleotide and its replacement by a new DNA fragment. In transcription, TFIIH has an essential role in transcription initiation. When the pre-initiation complex (PIC) has been established, TFIIH is required for promoter opening and promoter escape. Phosphorylation of the C-terminal tail (CTD) of the largest subunit of RNA polymerase II by the kinase module TFIIK controls the initiation of transcription. TFB6 facilitates dissociation of the SSL2 helicase from TFIIH after transcription initiation. The polypeptide is General transcription and DNA repair factor IIH subunit TFB6 (Saccharomyces cerevisiae (strain ATCC 204508 / S288c) (Baker's yeast)).